The primary structure comprises 226 residues: PKHD-type hydroxylase PST_0995 (226 aa).

The Fe2OG dioxygenase domain occupies 78–178 (KVFPPLFNCY…RLASFFWIQS (101 aa)). Residues histidine 96, aspartate 98, and histidine 159 each contribute to the Fe cation site. Arginine 169 provides a ligand contact to 2-oxoglutarate.

Fe(2+) serves as cofactor. L-ascorbate is required as a cofactor.

The polypeptide is PKHD-type hydroxylase PST_0995 (Stutzerimonas stutzeri (strain A1501) (Pseudomonas stutzeri)).